We begin with the raw amino-acid sequence, 282 residues long: Putative hydrolase Bcep18194_B0137 (282 aa).

Mg(2+) is bound by residues E124, E126, and D155.

This sequence belongs to the FAH family. Mg(2+) is required as a cofactor.

The polypeptide is Putative hydrolase Bcep18194_B0137 (Burkholderia lata (strain ATCC 17760 / DSM 23089 / LMG 22485 / NCIMB 9086 / R18194 / 383)).